The sequence spans 212 residues: Urease accessory protein UreG 2 (212 aa).

Residue 11 to 18 (GPVGSGKM) coordinates GTP.

The protein belongs to the SIMIBI class G3E GTPase family. UreG subfamily. As to quaternary structure, homodimer. UreD, UreF and UreG form a complex that acts as a GTP-hydrolysis-dependent molecular chaperone, activating the urease apoprotein by helping to assemble the nickel containing metallocenter of UreC. The UreE protein probably delivers the nickel.

It localises to the cytoplasm. Its function is as follows. Facilitates the functional incorporation of the urease nickel metallocenter. This process requires GTP hydrolysis, probably effectuated by UreG. Functionally, disrupting the ure2 operon has no effect on urease activity, or pathogen survival in BALB/c mice when inoculated by gavage, but confers slightly enhanced resistance to low pH killing in vitro. This Brucella suis biovar 1 (strain 1330) protein is Urease accessory protein UreG 2.